A 133-amino-acid chain; its full sequence is Large ribosomal subunit protein bL21 (133 aa).

The segment at 1–22 is disordered; sequence MAEKPAAKPKAAAAKAEAKDQS.

The protein belongs to the bacterial ribosomal protein bL21 family. As to quaternary structure, part of the 50S ribosomal subunit. Contacts protein L20.

In terms of biological role, this protein binds to 23S rRNA in the presence of protein L20. The polypeptide is Large ribosomal subunit protein bL21 (Prochlorococcus marinus (strain MIT 9303)).